Reading from the N-terminus, the 427-residue chain is Sialic acid TRAP transporter large permease protein SiaM (427 aa).

Transmembrane regions (helical) follow at residues 11–31 (LLFA…AFLI), 52–72 (FTLL…SAGI), 82–102 (SLVG…SLLF), 140–160 (ASCI…YGVV), 165–185 (IGAL…ALMV), 214–234 (AFLS…GKFT), 246–266 (ALFL…IEIL), 270–290 (VNTT…GWIV), 301–321 (DYFL…NLLL), 322–342 (LFLG…PFLV), 348–368 (VGID…IGIL), and 394–414 (VLPL…FPQF).

It belongs to the TRAP transporter large permease family. In terms of assembly, the complex comprises the extracytoplasmic solute receptor protein SiaP, and the two transmembrane proteins SiaQ and SiaM. SiaQ and SiaM form a tight 1:1 complex.

It localises to the cell inner membrane. In terms of biological role, part of the tripartite ATP-independent periplasmic (TRAP) transport system SiaPQM that catalyzes unidirectional Na(+)-dependent sialic acid uptake. The polypeptide is Sialic acid TRAP transporter large permease protein SiaM (Vibrio cholerae serotype O1 (strain ATCC 39315 / El Tor Inaba N16961)).